The primary structure comprises 237 residues: tRNA (guanine-N(7)-)-methyltransferase (237 aa).

S-adenosyl-L-methionine-binding residues include E68, E93, D120, and D143. Residue D143 is part of the active site. Residues K147, D179, and 216 to 219 each bind substrate; that span reads TKFE.

The protein belongs to the class I-like SAM-binding methyltransferase superfamily. TrmB family.

The enzyme catalyses guanosine(46) in tRNA + S-adenosyl-L-methionine = N(7)-methylguanosine(46) in tRNA + S-adenosyl-L-homocysteine. Its pathway is tRNA modification; N(7)-methylguanine-tRNA biosynthesis. Functionally, catalyzes the formation of N(7)-methylguanine at position 46 (m7G46) in tRNA. The chain is tRNA (guanine-N(7)-)-methyltransferase from Shewanella halifaxensis (strain HAW-EB4).